The sequence spans 295 residues: Bifunctional protein FolD (295 aa).

Residues 177–179 (GRS) and serine 202 each bind NADP(+).

The protein belongs to the tetrahydrofolate dehydrogenase/cyclohydrolase family. Homodimer.

The catalysed reaction is (6R)-5,10-methylene-5,6,7,8-tetrahydrofolate + NADP(+) = (6R)-5,10-methenyltetrahydrofolate + NADPH. It catalyses the reaction (6R)-5,10-methenyltetrahydrofolate + H2O = (6R)-10-formyltetrahydrofolate + H(+). Its pathway is one-carbon metabolism; tetrahydrofolate interconversion. Functionally, catalyzes the oxidation of 5,10-methylenetetrahydrofolate to 5,10-methenyltetrahydrofolate and then the hydrolysis of 5,10-methenyltetrahydrofolate to 10-formyltetrahydrofolate. This Psychrobacter arcticus (strain DSM 17307 / VKM B-2377 / 273-4) protein is Bifunctional protein FolD.